We begin with the raw amino-acid sequence, 116 residues long: Large ribosomal subunit protein uL23 (116 aa).

It belongs to the universal ribosomal protein uL23 family. In terms of assembly, part of the 50S ribosomal subunit. Contacts protein L29, and trigger factor when it is bound to the ribosome.

Its function is as follows. One of the early assembly proteins it binds 23S rRNA. One of the proteins that surrounds the polypeptide exit tunnel on the outside of the ribosome. Forms the main docking site for trigger factor binding to the ribosome. This Psychrobacter sp. (strain PRwf-1) protein is Large ribosomal subunit protein uL23.